We begin with the raw amino-acid sequence, 497 residues long: MNIMSDVRVRFCPSPTGTPHVGMVRTALFNWAHARHTGGKLIFRIEDTDAARDSEESYQAIIDSLKWLGMDWDEGVIVGGPHEPYRQSQRMDIYKDVLEKLKEAGFVYPAYSTAQEVEERHKAAGRDPKLGYDNYDRTLTDEQIAAFEAEGRQPVWRLRMPERDWKWNDLVRGEIEFKSSTQPDYVVARSNGAPLYTLVNPVDDALMGITHVLRGEDLLPSTPRQLALYEALKVIGVAQQTPEFGHLPFVMGEGNKKLSKRDPQSNLFNHRDAGIIPEGMLNYLALLGWSLAGEKDIFSVDELVENFDVTNVLANPARFDQKKLEAINADHIRLLEPKDFEQRLRAYLTEYTDFPTDYPAEKFAIAAELVQTRIKMLGDAYGLLSFLAIADEDLTLDEKSAKKNLKETAIPALDAGIAALEGVEEWTTPAIEAALHKALIEDLDLKPRVAFGALRVGISGQAVSPPLFESMELLGKESTLTRLRATREVTPYQVAAE.

The 'HIGH' region signature appears at Pro13 to Met23. Residues Lys257 to Arg261 carry the 'KMSKS' region motif. Lys260 is a binding site for ATP.

Belongs to the class-I aminoacyl-tRNA synthetase family. Glutamate--tRNA ligase type 1 subfamily. Monomer.

Its subcellular location is the cytoplasm. It carries out the reaction tRNA(Glu) + L-glutamate + ATP = L-glutamyl-tRNA(Glu) + AMP + diphosphate. In terms of biological role, catalyzes the attachment of glutamate to tRNA(Glu) in a two-step reaction: glutamate is first activated by ATP to form Glu-AMP and then transferred to the acceptor end of tRNA(Glu). The polypeptide is Glutamate--tRNA ligase (Corynebacterium diphtheriae (strain ATCC 700971 / NCTC 13129 / Biotype gravis)).